A 457-amino-acid chain; its full sequence is Glutamate--tRNA ligase 2 (457 aa).

A 'HIGH' region motif is present at residues 9–19 (PSPTGRIHIGN). The short motif at 250–254 (GLSKR) is the 'KMSKS' region element. ATP is bound at residue Lys-253.

Belongs to the class-I aminoacyl-tRNA synthetase family. Glutamate--tRNA ligase type 1 subfamily. As to quaternary structure, monomer.

Its subcellular location is the cytoplasm. The catalysed reaction is tRNA(Glu) + L-glutamate + ATP = L-glutamyl-tRNA(Glu) + AMP + diphosphate. Its function is as follows. Catalyzes the attachment of glutamate to tRNA(Glu) in a two-step reaction: glutamate is first activated by ATP to form Glu-AMP and then transferred to the acceptor end of tRNA(Glu). The chain is Glutamate--tRNA ligase 2 from Mesorhizobium japonicum (strain LMG 29417 / CECT 9101 / MAFF 303099) (Mesorhizobium loti (strain MAFF 303099)).